Consider the following 478-residue polypeptide: MLRKGSCKPGSWGSFWAILALVGLVTRAAQRADVGGEAAGTAINHSHMLLQRLQDLLRQGNASDVILRVQAVGTDEVRAFHTHRLLLGLHSELFRELLSNQSEVMLRESRDCAAVFDKFIRYLYCGELTVLLAQAIPLHRLATKYRVASLQRGVADYMRAHLAGGVGPAVGWYHYAVSTGDEALRESCLQFLAWNLSAVAGSAEWGAVSPELLAQLLQRSDLVLQDELELFHALEAWLGRARPPPTVAERALRAIRYPMIPPAQLFQLQARSAALARHGPAVADLLLQAYQFHAASPLHYAKFFHVNGSAFLPRNYLAPAWGAPWVINNPARDDRSTSFQTQLGPSGHDAGRRITWNVLFSPRWLPVSLRPVYADAAGTALPAARPEDGRPRLVVTPASSGGDAAGVSFQKTVLVGARHQGRLLVRHAYSFHQSSEEAGDFLAHADLQRRNSEYLVENALHLHLIVKPVYHTLIRTPS.

Positions 1 to 28 (MLRKGSCKPGSWGSFWAILALVGLVTRA) are cleaved as a signal peptide. N-linked (GlcNAc...) asparagine glycosylation is found at Asn61, Asn100, Asn195, and Asn307. Residues 63–132 (SDVILRVQAV…LYCGELTVLL (70 aa)) form the BTB domain. A BACK domain is found at 169 to 269 (AVGWYHYAVS…IPPAQLFQLQ (101 aa)).

The protein resides in the secreted. This chain is BTB/POZ domain-containing protein 17 (Btbd17), found in Mus musculus (Mouse).